A 752-amino-acid chain; its full sequence is Ribonucleases P/MRP protein subunit popl-1 (752 aa).

Residues 638-663 (KTTKRKRVNRKKRESKKRRKIEQEKR) form a disordered region. The span at 640-657 (TKRKRVNRKKRESKKRRK) shows a compositional bias: basic residues.

As to quaternary structure, component of nuclear RNase P and RNase MRP ribonucleoproteins. Several subunits of RNase P are also part of the RNase MRP complex.

The protein resides in the nucleus. It localises to the nucleolus. It catalyses the reaction Endonucleolytic cleavage of RNA, removing 5'-extranucleotides from tRNA precursor.. Component of ribonuclease P, a ribonucleoprotein complex that generates mature tRNA molecules by cleaving their 5'-ends. Also a component of the MRP ribonuclease complex, which cleaves pre-rRNA sequences. This Caenorhabditis elegans protein is Ribonucleases P/MRP protein subunit popl-1.